We begin with the raw amino-acid sequence, 1738 residues long: Sodium leak channel NALCN (1738 aa).

Topologically, residues 1-36 (MLKRKQSSRVEAQPVTDFGPDESLSDNADILWINKP) are cytoplasmic. Residues 37-57 (WVHSLLRICAIISVIPVCMNT) form a helical membrane-spanning segment. Topologically, residues 58–65 (PMTFEHYP) are extracellular. The chain crosses the membrane as a helical span at residues 66 to 90 (PLQYVTFTLDTLLMFLYTAEMIAKM). Over 91–106 (HIRGIVKGDSSYVKDR) the chain is Cytoplasmic. The chain crosses the membrane as a helical span at residues 107–129 (WCVFDGFMVFCLWVSLVLQVFEI). At 130–137 (ADIVDQMS) the chain is on the extracellular side. The chain crosses the membrane as a helical; Voltage-sensor span at residues 138 to 158 (PWGMLRIPRPLIMIRAFRIYF). At 159–173 (RFELPRTRITNILKR) the chain is on the cytoplasmic side. A helical transmembrane segment spans residues 174–199 (SGEQIWSVSIFLLFFLLLYGILGVQM). Residues 200 to 269 (FGTFTYHCVV…YSGFNEIGTS (70 aa)) are Extracellular-facing. Cystine bridges form between C207–C239 and C229–C245. N-linked (GlcNAc...) asparagine glycans are attached at residues N210 and N216. Residues 270–289 (IFTVYEASSQEGWVFLMYRA) constitute an intramembrane region (pore-forming). At 290–294 (IDSFP) the chain is on the extracellular side. A helical transmembrane segment spans residues 295 to 322 (RWRSYFYFITLIFFLAWLVKNVFIAVII). At 323–382 (ETFAEIRVQFQQMWGTRSSTTSTATTQMFHEDAAGGWQLVAVDVNKPQGRAPACLQKMMR) the chain is on the cytoplasmic side. The helical transmembrane segment at 383-403 (SSVFHMFILSMVTVDVIVAAS) threads the bilayer. The Extracellular portion of the chain corresponds to 404 to 416 (NYYKGENFRRQYD). Residues 417–439 (EFYLAEVAFTVLFDLEALLKIWC) form a helical membrane-spanning segment. Topologically, residues 440–447 (LGFTGYIS) are cytoplasmic. The chain crosses the membrane as a helical span at residues 448–468 (SSLHKFELLLVIGTTLHVYPD). The Extracellular portion of the chain corresponds to 469–472 (LYHS). A helical; Voltage-sensor membrane pass occupies residues 473–492 (QFTYFQVLRVVRLIKISPAL). Residues 493-502 (EDFVYKIFGP) lie on the Cytoplasmic side of the membrane. The helical transmembrane segment at 503–530 (GKKLGSLVVFTASLLIVMSAISLQMFCF) threads the bilayer. Topologically, residues 531 to 543 (VEELDRFTTFPRA) are extracellular. Residues 544 to 563 (FMSMFQILTQEGWVDVMDQT) constitute an intramembrane region (pore-forming). The Extracellular segment spans residues 564–569 (LNAVGH). A helical transmembrane segment spans residues 570 to 599 (MWAPLVAIYFILYHLFATLILLSLFVAVIL). The Cytoplasmic segment spans residues 600–886 (DNLELDEDLK…QLYDLLGLVT (287 aa)). The interval 762–789 (QERRSLRHGSNSQRISRGKSLETLTQDH) is disordered. Positions 795 to 830 (YRNAQREDSEIKMIQEKKEQAEMKRKVQEEELRENH) form a coiled coil. Residues 887-906 (YLDWVMITVTICSCISMMFE) traverse the membrane as a helical segment. At 907–915 (SPFRRVMHA) the chain is on the extracellular side. A helical membrane pass occupies residues 916–939 (PTLQIAEYVFVIFMSIELNLKIMA). The Cytoplasmic portion of the chain corresponds to 940–947 (DGLFFTPT). Residues 948 to 972 (AVIRDFGGVMDIFIYLVSLIFLCWM) form a helical membrane-spanning segment. The Extracellular portion of the chain corresponds to 973–980 (PQNVPAES). The chain crosses the membrane as a helical; Voltage-sensor span at residues 981 to 1003 (GAQLLMVLRCLRPLRIFKLVPQM). At 1004 to 1015 (RKVVRELFSGFK) the chain is on the cytoplasmic side. Residues 1016–1039 (EIFLVSILLLTLMLVFASFGVQLF) form a helical membrane-spanning segment. Residues 1040–1104 (AGKLAKCNDP…NFNFDNVGNA (65 aa)) are Extracellular-facing. C1046 and C1057 are disulfide-bonded. An N-linked (GlcNAc...) asparagine glycan is attached at N1064. Residues 1105–1124 (MLALFEVLSLKGWVEVRDVI) constitute an intramembrane region (pore-forming). Topologically, residues 1125 to 1129 (IHRVG) are extracellular. The helical transmembrane segment at 1130-1159 (PIHGIYIHVFVFLGCMIGLTLFVGVVIANF) threads the bilayer. Residues 1160-1210 (NENKGTALLTVDQRRWEDLKSRLKIAQPLHLPPRPDNDGFRAKMYDITQHP) are Cytoplasmic-facing. A helical membrane pass occupies residues 1211 to 1227 (FFKRTIALLVLAQSVLL). Over 1228 to 1236 (SVKWDVEDP) the chain is Extracellular. Residues 1237-1260 (VTVPLATMSVVFTFIFVLEVTMKI) traverse the membrane as a helical segment. At 1261 to 1271 (IAMSPAGFWQS) the chain is on the cytoplasmic side. Residues 1272–1293 (RRNRYDLLVTSLGVVWVVLHFA) form a helical membrane-spanning segment. The Extracellular portion of the chain corresponds to 1294–1296 (LLN). The helical; Voltage-sensor transmembrane segment at 1297-1318 (AYTYMMGACVIVFRFFSICGKH) threads the bilayer. Over 1319–1331 (VTLKMLLLTVVVS) the chain is Cytoplasmic. Residues 1332 to 1357 (MYKSFFIIVGMFLLLLCYAFAGVVLF) form a helical membrane-spanning segment. The Extracellular portion of the chain corresponds to 1358–1378 (GTVKYGENINRHANFSSAGKA). The pore-forming intramembrane region spans 1379–1398 (ITVLFRIVTGEDWNKIMHDC). Topologically, residues 1399–1420 (MVQPPFCTPDEFTYWATDCGNY) are extracellular. C1405 and C1417 are joined by a disulfide. The helical transmembrane segment at 1421-1447 (AGALMYFCSFYVIIAYIMLNLLVAIIV) threads the bilayer. At 1448-1738 (ENFSLFYSTE…DESGDDLLDI (291 aa)) the chain is on the cytoplasmic side. The tract at residues 1611 to 1679 (PPSIETTQPS…WRLPSAPKPI (69 aa)) is disordered. The segment covering 1613–1631 (SIETTQPSEDTNANSQDHN) has biased composition (polar residues). Positions 1633–1648 (QPESSSQQQLLSPTLS) are enriched in low complexity.

The protein belongs to the NALCN family. In terms of assembly, found in a complex with NALCN, UNC79, UNC80 and NACL1; these auxiliary subunits are indispensable for the function of NALCN channel. Interacts with UNC80; required for the NALCN activation/inhibition by GPCRs in neurons. Found in a complex with NALCN, UNC79 and UNC80; UNC80 bridges NALCN to UNC79. Interacts with CHRM3. Post-translationally, phosphorylated on tyrosine residues. In terms of tissue distribution, predominantly expressed in the brain, moderately in the heart and weakly in the pancreas.

The protein resides in the cell membrane. It catalyses the reaction Na(+)(in) = Na(+)(out). Inhibited by low micromolar concentrations of Gd(3+) and high micromolar concentrations of verapamil. Insensitive to tetrodotoxin (TTX) and potentiated by low external Ca(2+) concentration. Functionally, voltage-gated ion channel responsible for the resting Na(+) permeability that controls neuronal excitability. NALCN channel functions as a multi-protein complex, which consists at least of NALCN, NALF1, UNC79 and UNC80. NALCN is the voltage-sensing, pore-forming subunit of the NALCN channel complex. NALCN channel complex is constitutively active and conducts monovalent cations but is blocked by physiological concentrations of extracellular divalent cations. In addition to its role in regulating neuronal excitability, is required for normal respiratory rhythm, systemic osmoregulation by controlling the serum sodium concentration and in the regulation of the intestinal pace-making activity in the interstitial cells of Cajal. NALCN channel is also activated by neuropeptides such as neurotensin and substance P (SP) through a SRC family kinases-dependent pathway. In addition, NALCN activity is enhanced/modulated by several GPCRs, such as CHRM3. The protein is Sodium leak channel NALCN (Nalcn) of Rattus norvegicus (Rat).